Consider the following 207-residue polypeptide: Small ribosomal subunit protein uS4 (207 aa).

The S4 RNA-binding domain maps to 97–165; sequence SRLDNLVFRM…VKLALESKAV (69 aa).

The protein belongs to the universal ribosomal protein uS4 family. Part of the 30S ribosomal subunit. Contacts protein S5. The interaction surface between S4 and S5 is involved in control of translational fidelity.

In terms of biological role, one of the primary rRNA binding proteins, it binds directly to 16S rRNA where it nucleates assembly of the body of the 30S subunit. With S5 and S12 plays an important role in translational accuracy. This is Small ribosomal subunit protein uS4 from Mycoplasmoides gallisepticum (strain R(low / passage 15 / clone 2)) (Mycoplasma gallisepticum).